Reading from the N-terminus, the 375-residue chain is ATP-sensitive inward rectifier potassium channel 15 (375 aa).

Topologically, residues Met-1 to Asp-60 are cytoplasmic. A helical transmembrane segment spans residues Met-61–Ala-87. At Ile-88–Ser-113 the chain is on the extracellular side. The segment at residues Leu-114–Tyr-130 is an intramembrane region (helical; Pore-forming). The Selectivity filter signature appears at Thr-127 to Val-132. The Extracellular segment spans residues Gly-131 to Cys-139. Residues Pro-140 to Leu-165 form a helical membrane-spanning segment. Residues Ala-166–Val-375 are Cytoplasmic-facing.

This sequence belongs to the inward rectifier-type potassium channel (TC 1.A.2.1) family. KCNJ15 subfamily. In terms of assembly, can form heteromultimeric channels with Kir5.1/KCNJ16. Interacts with PATJ. Expressed in the proximal segment of the nephron.

The protein resides in the membrane. Its subcellular location is the cell membrane. The enzyme catalyses K(+)(in) = K(+)(out). Its activity is regulated as follows. Channel activity is regulated by variations of cytosolic pH; reversibly inhibited by acidic pH values. Inhibited by Ba(2+) and Cs(+) in a voltage-dependent manner. Its function is as follows. Inward rectifier potassium channels are characterized by a greater tendency to allow potassium to flow into the cell rather than out of it. Their voltage dependence is regulated by the concentration of extracellular potassium; as external potassium is raised, the voltage range of the channel opening shifts to more positive voltages. The inward rectification is mainly due to the blockage of outward current by internal magnesium. This is ATP-sensitive inward rectifier potassium channel 15 (Kcnj15) from Mus musculus (Mouse).